Reading from the N-terminus, the 726-residue chain is Catalase-peroxidase (726 aa).

The segment at Met-1–Ser-33 is disordered. The tryptophyl-tyrosyl-methioninium (Trp-Tyr) (with M-252) cross-link spans Trp-105–Tyr-226. His-106 functions as the Proton acceptor in the catalytic mechanism. The tryptophyl-tyrosyl-methioninium (Tyr-Met) (with W-105) cross-link spans Tyr-226 to Met-252. His-267 contributes to the heme b binding site.

Belongs to the peroxidase family. Peroxidase/catalase subfamily. As to quaternary structure, homodimer or homotetramer. It depends on heme b as a cofactor. Post-translationally, formation of the three residue Trp-Tyr-Met cross-link is important for the catalase, but not the peroxidase activity of the enzyme.

It carries out the reaction H2O2 + AH2 = A + 2 H2O. The catalysed reaction is 2 H2O2 = O2 + 2 H2O. Its function is as follows. Bifunctional enzyme with both catalase and broad-spectrum peroxidase activity. In Salmonella paratyphi B (strain ATCC BAA-1250 / SPB7), this protein is Catalase-peroxidase.